Here is a 162-residue protein sequence, read N- to C-terminus: Ubiquitin D (162 aa).

Ubiquitin-like domains are found at residues 3–78 and 87–160; these read SVRT…LKVV and LFLV…THCT.

Belongs to the ubiquitin D family. In terms of assembly, interacts directly with the 26S proteasome. Interacts with NUB1; this interaction facilitates the linking of UBD-conjugated target protein to the proteasome complex and accelerates its own degradation and that of its conjugates. Interacts (via ubiquitin-like 1 domain) with the spindle checkpoint protein MAD2L1 during mitosis. Present in aggresomes of proteasome inhibited cells. Interacts with HDAC6 under proteasome impairment conditions. Forms a thioester with UBA6 in cells stimulated with tumor necrosis factor-alpha (TNFa) and interferon-gamma (IFNg). Interacts with SQSTM1 and TP53/p53. Can be acetylated. In terms of tissue distribution, mostly expressed in thymus and intestine.

It is found in the nucleus. It localises to the cytoplasm. Ubiquitin-like protein modifier which can be covalently attached to target proteins and subsequently leads to their degradation by the 26S proteasome, in a NUB1-dependent manner. Conjugation to the target protein is activated by UBA6 via adenylation of its C-terminal glycine. Probably functions as a survival factor. Promotes the expression of the proteasome subunit beta type-9 (PSMB9/LMP2). Regulates TNF-alpha-induced and LPS-mediated activation of the central mediator of innate immunity NF-kappa-B by promoting TNF-alpha-mediated proteasomal degradation of ubiquitinated-I-kappa-B-alpha. Required for TNF-alpha-induced p65 nuclear translocation in renal tubular epithelial cells (RTECs). May be involved in dendritic cell (DC) maturation, the process by which immature dendritic cells differentiate into fully competent antigen-presenting cells that initiate T-cell responses. Mediates mitotic non-disjunction and chromosome instability, in long-term in vitro culture and cancers, by abbreviating mitotic phase and impairing the kinetochore localization of MAD2L1 during the prometaphase stage of the cell cycle. May be involved in the formation of aggresomes when proteasome is saturated or impaired. Mediates apoptosis in a caspase-dependent manner, especially in renal epithelium and tubular cells during renal diseases. This Mus musculus (Mouse) protein is Ubiquitin D (Ubd).